The chain runs to 271 residues: MAKTGESLRDKPRWSLVGMTALVTGGSKGIGEAVVEELATLGARIHTCARDETQLQESLRKWQAKGFQVTTSVCDVSSRDKREKLMETVSTIFEGKLNILVNNVGTCIVKPTLQHTAEDFSFTMATNLESAFHLSQLAHPLLKASGSGSIVLISSVSGVVHVNGASIYGVSKGAMNQLGRNLACEWASDNIRTNSVCPWFIETPLVTESLSNEEFRKEVESRPPMGRVGEVNEVSSLVAFLCLPAASYITGQTICVDGGFTVNGFSFKPLP.

22–46 (LVTGGSKGIGEAVVEELATLGARIH) provides a ligand contact to NADP(+). Serine 155 lines the substrate pocket. The Proton acceptor role is filled by tyrosine 168.

Belongs to the short-chain dehydrogenases/reductases (SDR) family. SDR65C subfamily.

Oxidoreductase active on cyclic ketones, but not on tropinone or nortropinone. This is Tropinone reductase homolog At2g29360 from Arabidopsis thaliana (Mouse-ear cress).